The chain runs to 323 residues: D-alanine--D-alanine ligase (323 aa).

The ATP-grasp domain maps to 105 to 305; that stretch reads KQQLVPRGIP…YEDLVEAIVE (201 aa). 131 to 188 provides a ligand contact to ATP; it reads PLARPYVLKPVNEGSSVGVAIVTDESNYGNPIRRDAPGPWQEFRELLAEPFIRGRELT. Asp256, Glu272, and Asn274 together coordinate Mg(2+).

This sequence belongs to the D-alanine--D-alanine ligase family. It depends on Mg(2+) as a cofactor. Requires Mn(2+) as cofactor.

It localises to the cytoplasm. It catalyses the reaction 2 D-alanine + ATP = D-alanyl-D-alanine + ADP + phosphate + H(+). Its pathway is cell wall biogenesis; peptidoglycan biosynthesis. In terms of biological role, cell wall formation. The sequence is that of D-alanine--D-alanine ligase from Erythrobacter litoralis (strain HTCC2594).